The sequence spans 637 residues: Sphingomyelin phosphodiesterase B (637 aa).

Positions 1–20 are cleaved as a signal peptide; it reads MKVKAPILLLFVFLINFCFS. The N-linked (GlcNAc...) asparagine glycan is linked to Asn-73. In terms of domain architecture, Saposin B-type spans 73 to 155; that stretch reads NGTKCDICKF…GFVGFCPYVP (83 aa). 3 cysteine pairs are disulfide-bonded: Cys-77/Cys-151, Cys-80/Cys-145, and Cys-108/Cys-119. N-linked (GlcNAc...) asparagine glycosylation is found at Asn-128 and Asn-157. The Zn(2+) site is built by Asp-191 and His-193. Cys-212 and Cys-233 form a disulfide bridge. Asp-263 contacts Zn(2+). N-linked (GlcNAc...) asparagine glycosylation occurs at Asn-279. Zn(2+) is bound at residue Asn-304. Asn-377 is a glycosylation site (N-linked (GlcNAc...) asparagine). 3 residues coordinate Zn(2+): His-407, His-441, and His-443. Asn-523 and Asn-546 each carry an N-linked (GlcNAc...) asparagine glycan. Cys-582 and Cys-595 are oxidised to a cystine. An N-linked (GlcNAc...) asparagine glycan is attached at Asn-606.

This sequence belongs to the acid sphingomyelinase family. It depends on Zn(2+) as a cofactor.

Its subcellular location is the secreted. Its function is as follows. Converts sphingomyelin to ceramide. In Dictyostelium discoideum (Social amoeba), this protein is Sphingomyelin phosphodiesterase B (sgmB).